Reading from the N-terminus, the 635-residue chain is MNQLEEIVKYVIYKCRENNHPVTETLAAFVTQTIYNPKTDRFYLEDKLTASQVDELKATVLQKLSQIDKPNMKTIQMQISYDSAYIESEIQRQERIKNQSIETGKLTDEVVSLEIKNAKDFEGLTVLFKKIFNFLLYKNKELMYDGTNKTGNQDSENQATQFNIEKEVAAGLESVIPRAALGPFVSLNPSEKVTQLVELSNLVIGIRLFNKWIQKGGIGLVPFQDLLEYEGRDLIERIRQEAFEVIENCDNYTIFFQNVGPGKIKISDEQFKQYKDELTFLRQYLSYILSIQEDVDISENSVDSNQTRYLKEIKDLETLLKQKSSAPKEQVYPKFATLAQAYIQLLEEKKLCLTRVKLFELLQEMRKGFKLTLPRNLILTAKNISQDPSNEEQVEIEYSEDCGIERLLPKNTPDFMQTPLDYLGFCLWSIVKRDGLLLPGKPALGVFRYKDKNCVFSDEKSINEFLSDPQQFIQGVINQCRKNPELIHLLRMDDSFKNVNLNIYVSGQEGGHQLSNKLMVDKGIETPLHFVEKRLDPNYCWNEWELRKKALQMANIRKRQTKACQTILSNFKVDSEAQTYLPKDNETNTGKTEWDIRKFAIEQAKKKGIIAGTDRAPYPIHPRNYITGLRDKDTN.

Belongs to the CFAP206 family.

The protein resides in the cytoplasm. It is found in the cytoskeleton. Its subcellular location is the cilium axoneme. May regulate cilium motility through its role in the assembly of the axonemal RS2 radial spoke. This Tetrahymena thermophila (strain SB210) protein is Cilia- and flagella-associated protein 206.